Here is a 338-residue protein sequence, read N- to C-terminus: 26S proteasome non-ATPase regulatory subunit 7 (338 aa).

An MPN domain is found at 11 to 147 (VIVHPLVLLS…TEAYISVEEV (137 aa)). Positions 286–338 (RDAEEGKSDSKEAKEKNKDSKDKDNKETKDKDGKKAEEKADKGKDEGGKGSRK) are disordered.

This sequence belongs to the peptidase M67A family.

Acts as a regulatory subunit of the 26S proteasome which is involved in the ATP-dependent degradation of ubiquitinated proteins. The sequence is that of 26S proteasome non-ATPase regulatory subunit 7 (Rpn8) from Drosophila melanogaster (Fruit fly).